Reading from the N-terminus, the 205-residue chain is Probable thymidylate kinase (205 aa).

10 to 17 (GIDGSGKT) provides a ligand contact to ATP.

The protein belongs to the thymidylate kinase family.

It catalyses the reaction dTMP + ATP = dTDP + ADP. This chain is Probable thymidylate kinase (tmk), found in Pyrococcus horikoshii (strain ATCC 700860 / DSM 12428 / JCM 9974 / NBRC 100139 / OT-3).